We begin with the raw amino-acid sequence, 356 residues long: Histidinol-phosphate aminotransferase (356 aa).

At lysine 214 the chain carries N6-(pyridoxal phosphate)lysine.

The protein belongs to the class-II pyridoxal-phosphate-dependent aminotransferase family. Histidinol-phosphate aminotransferase subfamily. In terms of assembly, homodimer. It depends on pyridoxal 5'-phosphate as a cofactor.

The catalysed reaction is L-histidinol phosphate + 2-oxoglutarate = 3-(imidazol-4-yl)-2-oxopropyl phosphate + L-glutamate. The protein operates within amino-acid biosynthesis; L-histidine biosynthesis; L-histidine from 5-phospho-alpha-D-ribose 1-diphosphate: step 7/9. The chain is Histidinol-phosphate aminotransferase from Escherichia coli (strain 55989 / EAEC).